The primary structure comprises 194 residues: Holliday junction branch migration complex subunit RuvA (194 aa).

Positions 1-61 (MYDFLTGIIK…DNQISLYGFK (61 aa)) are domain I. The segment at 62–139 (TVKERNLFQK…GDFSKNIAPM (78 aa)) is domain II. The segment at 139–143 (MKNLL) is flexible linker. Positions 144–194 (ENSAELDDALAALVALGFSSKEVNKINPKLASLGELTTDAYIQKGLKLLTK) are domain III.

This sequence belongs to the RuvA family. As to quaternary structure, homotetramer. Forms an RuvA(8)-RuvB(12)-Holliday junction (HJ) complex. HJ DNA is sandwiched between 2 RuvA tetramers; dsDNA enters through RuvA and exits via RuvB. An RuvB hexamer assembles on each DNA strand where it exits the tetramer. Each RuvB hexamer is contacted by two RuvA subunits (via domain III) on 2 adjacent RuvB subunits; this complex drives branch migration. In the full resolvosome a probable DNA-RuvA(4)-RuvB(12)-RuvC(2) complex forms which resolves the HJ.

It is found in the cytoplasm. Functionally, the RuvA-RuvB-RuvC complex processes Holliday junction (HJ) DNA during genetic recombination and DNA repair, while the RuvA-RuvB complex plays an important role in the rescue of blocked DNA replication forks via replication fork reversal (RFR). RuvA specifically binds to HJ cruciform DNA, conferring on it an open structure. The RuvB hexamer acts as an ATP-dependent pump, pulling dsDNA into and through the RuvAB complex. HJ branch migration allows RuvC to scan DNA until it finds its consensus sequence, where it cleaves and resolves the cruciform DNA. The chain is Holliday junction branch migration complex subunit RuvA from Oenococcus oeni (strain ATCC BAA-331 / PSU-1).